The chain runs to 1374 residues: DNA-directed RNA polymerase subunit beta (1374 aa).

It belongs to the RNA polymerase beta chain family. As to quaternary structure, the RNAP catalytic core consists of 2 alpha, 1 beta, 1 beta' and 1 omega subunit. When a sigma factor is associated with the core the holoenzyme is formed, which can initiate transcription.

It carries out the reaction RNA(n) + a ribonucleoside 5'-triphosphate = RNA(n+1) + diphosphate. Its function is as follows. DNA-dependent RNA polymerase catalyzes the transcription of DNA into RNA using the four ribonucleoside triphosphates as substrates. In Acidovorax ebreus (strain TPSY) (Diaphorobacter sp. (strain TPSY)), this protein is DNA-directed RNA polymerase subunit beta.